The primary structure comprises 29 residues: Cytochrome b6-f complex subunit 8 (29 aa).

The chain crosses the membrane as a helical span at residues 3 to 23 (ILTLGWVSILALFTWSIAMVV).

It belongs to the PetN family. As to quaternary structure, the 4 large subunits of the cytochrome b6-f complex are cytochrome b6, subunit IV (17 kDa polypeptide, PetD), cytochrome f and the Rieske protein, while the 4 small subunits are PetG, PetL, PetM and PetN. The complex functions as a dimer.

The protein resides in the cellular thylakoid membrane. Its function is as follows. Component of the cytochrome b6-f complex, which mediates electron transfer between photosystem II (PSII) and photosystem I (PSI), cyclic electron flow around PSI, and state transitions. The chain is Cytochrome b6-f complex subunit 8 from Microcystis aeruginosa (strain NIES-843 / IAM M-2473).